The chain runs to 171 residues: 3-hydroxydecanoyl-[acyl-carrier-protein] dehydratase (171 aa).

His70 is an active-site residue.

The protein belongs to the thioester dehydratase family. FabA subfamily. In terms of assembly, homodimer.

Its subcellular location is the cytoplasm. The catalysed reaction is a (3R)-hydroxyacyl-[ACP] = a (2E)-enoyl-[ACP] + H2O. The enzyme catalyses (3R)-hydroxydecanoyl-[ACP] = (2E)-decenoyl-[ACP] + H2O. It carries out the reaction (2E)-decenoyl-[ACP] = (3Z)-decenoyl-[ACP]. Its pathway is lipid metabolism; fatty acid biosynthesis. In terms of biological role, necessary for the introduction of cis unsaturation into fatty acids. Catalyzes the dehydration of (3R)-3-hydroxydecanoyl-ACP to E-(2)-decenoyl-ACP and then its isomerization to Z-(3)-decenoyl-ACP. Can catalyze the dehydratase reaction for beta-hydroxyacyl-ACPs with saturated chain lengths up to 16:0, being most active on intermediate chain length. The chain is 3-hydroxydecanoyl-[acyl-carrier-protein] dehydratase from Azotobacter vinelandii (strain DJ / ATCC BAA-1303).